The primary structure comprises 459 residues: Exodeoxyribonuclease 7 large subunit (459 aa).

This sequence belongs to the XseA family. As to quaternary structure, heterooligomer composed of large and small subunits.

The protein localises to the cytoplasm. It catalyses the reaction Exonucleolytic cleavage in either 5'- to 3'- or 3'- to 5'-direction to yield nucleoside 5'-phosphates.. Bidirectionally degrades single-stranded DNA into large acid-insoluble oligonucleotides, which are then degraded further into small acid-soluble oligonucleotides. The polypeptide is Exodeoxyribonuclease 7 large subunit (Pseudomonas savastanoi pv. phaseolicola (strain 1448A / Race 6) (Pseudomonas syringae pv. phaseolicola (strain 1448A / Race 6))).